A 337-amino-acid chain; its full sequence is Annexin E1 (337 aa).

Annexin repeat units lie at residues 10–80 (TGVT…MLYK), 81–154 (PRAQ…AVAT), 161–238 (DTHE…LAHD), and 242–312 (DPCC…LLWE).

It belongs to the annexin family.

Its subcellular location is the cell projection. The protein resides in the cilium. It localises to the flagellum. In terms of biological role, may function as a calcium-regulated structural element linking phospholipid bilayer and underlying axoneme. In Giardia intestinalis (Giardia lamblia), this protein is Annexin E1 (ANXE1).